Reading from the N-terminus, the 297-residue chain is Light-independent protochlorophyllide reductase iron-sulfur ATP-binding protein (297 aa).

Residues 41–46 (GIGKST) and lysine 70 each bind ATP. Mg(2+) is bound at residue serine 45. [4Fe-4S] cluster-binding residues include cysteine 126 and cysteine 160. ATP contacts are provided by residues 211–212 (NR) and 235–237 (PDL).

The protein belongs to the NifH/BchL/ChlL family. As to quaternary structure, homodimer. Protochlorophyllide reductase is composed of three subunits; BchL, BchN and BchB. The cofactor is [4Fe-4S] cluster.

It carries out the reaction chlorophyllide a + oxidized 2[4Fe-4S]-[ferredoxin] + 2 ADP + 2 phosphate = protochlorophyllide a + reduced 2[4Fe-4S]-[ferredoxin] + 2 ATP + 2 H2O. The protein operates within porphyrin-containing compound metabolism; bacteriochlorophyll biosynthesis (light-independent). In terms of biological role, component of the dark-operative protochlorophyllide reductase (DPOR) that uses Mg-ATP and reduced ferredoxin to reduce ring D of protochlorophyllide (Pchlide) to form chlorophyllide a (Chlide). This reaction is light-independent. The L component serves as a unique electron donor to the NB-component of the complex, and binds Mg-ATP. The protein is Light-independent protochlorophyllide reductase iron-sulfur ATP-binding protein of Methylorubrum extorquens (strain CM4 / NCIMB 13688) (Methylobacterium extorquens).